Reading from the N-terminus, the 138-residue chain is Small ribosomal subunit protein uS11c (138 aa).

Residues Met1–Gly22 are disordered. Positions Gly9 to Gly22 are enriched in basic residues.

It belongs to the universal ribosomal protein uS11 family. As to quaternary structure, part of the 30S ribosomal subunit.

It is found in the plastid. The protein resides in the chloroplast. The polypeptide is Small ribosomal subunit protein uS11c (Piper cenocladum (Ant piper)).